The primary structure comprises 575 residues: Aspartate--tRNA ligase (575 aa).

Residue Glu169 participates in L-aspartate binding. Positions 193–196 (QLFK) are aspartate. Position 215 (Arg215) interacts with L-aspartate. ATP is bound by residues 215–217 (RDE) and Gln224. His438 is an L-aspartate binding site. Residue Glu472 coordinates ATP. Position 479 (Arg479) interacts with L-aspartate. 524–527 (GLDR) contacts ATP.

It belongs to the class-II aminoacyl-tRNA synthetase family. Type 1 subfamily. In terms of assembly, homodimer.

Its subcellular location is the cytoplasm. The enzyme catalyses tRNA(Asp) + L-aspartate + ATP = L-aspartyl-tRNA(Asp) + AMP + diphosphate. Its function is as follows. Catalyzes the attachment of L-aspartate to tRNA(Asp) in a two-step reaction: L-aspartate is first activated by ATP to form Asp-AMP and then transferred to the acceptor end of tRNA(Asp). In Mycoplasma capricolum subsp. capricolum (strain California kid / ATCC 27343 / NCTC 10154), this protein is Aspartate--tRNA ligase.